A 359-amino-acid polypeptide reads, in one-letter code: Protein Wnt-5b (359 aa).

The N-terminal stretch at 1 to 17 is a signal peptide; sequence MPSLLLLFTAALLSSWA. C83 and C94 are joined by a disulfide. N-linked (GlcNAc...) asparagine glycans are attached at residues N93 and N99. Cystine bridges form between C133–C141, C143–C161, C217–C231, C219–C226, C288–C319, C304–C314, C318–C358, C334–C349, C336–C346, and C341–C342. S223 carries O-palmitoleoyl serine; by PORCN lipidation. N291 and N305 each carry an N-linked (GlcNAc...) asparagine glycan.

The protein belongs to the Wnt family. In terms of assembly, interacts with PORCN. In terms of processing, palmitoleoylation is required for efficient binding to frizzled receptors. Depalmitoleoylation leads to Wnt signaling pathway inhibition.

It localises to the secreted. Its subcellular location is the extracellular space. The protein localises to the extracellular matrix. Its function is as follows. Ligand for members of the frizzled family of seven transmembrane receptors. Probable developmental protein. May be a signaling molecule which affects the development of discrete regions of tissues. Is likely to signal over only few cell diameters. This Pongo abelii (Sumatran orangutan) protein is Protein Wnt-5b (WNT5B).